We begin with the raw amino-acid sequence, 252 residues long: Chaplin-A (252 aa).

An N-terminal signal peptide occupies residues 1–20; that stretch reads MVAAAAATGILSLCGSPALA. Residues 31–71 form the Chaplin 1 domain; it reads SPGAVSGNALQVPVDVPVNACGNTVDVIAALNPAFGNECEN. 2 disordered regions span residues 71 to 121 and 150 to 224; these read NASD…GNNA and CEND…GSEG. Positions 86–108 are enriched in low complexity; it reads EDASSSSSSSTSASSSGSHADGA. The Chaplin 2 domain maps to 112–152; that stretch reads SPGVGSGNNAQVPVDVPVNLCGNTVDVIAALNPVFGNKCEN. Residues 153 to 165 are compositionally biased toward acidic residues; the sequence is DAEEPPGYGEEEP. Residues 210–224 show a composition bias toward low complexity; that stretch reads QTEQPPALAETGSEG. Positions 217–221 match the LPXTG sorting signal motif; that stretch reads LAETG. Propeptides (removed by sortase) lie at residues 219-252 and 221-252; these read ETGS…LSGR and GSEG…LSGR. Position 220 is a pentaglycyl murein peptidoglycan amidated threonine (Thr220).

This sequence belongs to the chaplin family. Long chaplin subfamily.

It is found in the secreted. The protein localises to the cell wall. In terms of biological role, one of 8 partially redundant surface-active proteins required for efficient formation of aerial mycelium; the short chaplins assemble into a hydrophobic, amyloidal fibrillar surface layer that envelopes and protects aerial hyphae and spores, presumably anchored to the long chaplins. Chaplins have an overlapping function with the surface-active SapB peptide; chaplins are essential on minimal medium while on rich medium both chaplins and SapB are required for efficient aerial hyphae formation. A minimal chaplin strain capable of forming aerial mycelium/hyphae on minimal medium contains ChpC, ChpE and ChpH. The strain also has restored rodlet formation on the hyphae surface. A second minimal chaplin strain with ChpA, ChpD and ChpE makes slightly less robust hyphae. The long chaplins (ChpA, ChpB, ChpC) are not absolutely necessary for short chaplin localization or rodlet formation, but probably play a role in initiating aerial hyphae development. Chaplins are also involved in cell attachment to a hydrophobic surface. The polypeptide is Chaplin-A (Streptomyces coelicolor (strain ATCC BAA-471 / A3(2) / M145)).